A 493-amino-acid polypeptide reads, in one-letter code: UDP-N-acetylmuramoylalanine--D-glutamate ligase (493 aa).

126-132 (GTNGKTT) is an ATP binding site.

It belongs to the MurCDEF family.

Its subcellular location is the cytoplasm. It catalyses the reaction UDP-N-acetyl-alpha-D-muramoyl-L-alanine + D-glutamate + ATP = UDP-N-acetyl-alpha-D-muramoyl-L-alanyl-D-glutamate + ADP + phosphate + H(+). It functions in the pathway cell wall biogenesis; peptidoglycan biosynthesis. In terms of biological role, cell wall formation. Catalyzes the addition of glutamate to the nucleotide precursor UDP-N-acetylmuramoyl-L-alanine (UMA). The sequence is that of UDP-N-acetylmuramoylalanine--D-glutamate ligase from Mycolicibacterium smegmatis (strain ATCC 700084 / mc(2)155) (Mycobacterium smegmatis).